Reading from the N-terminus, the 106-residue chain is Nucleoid-associated protein Rpal_0620 (106 aa).

It belongs to the YbaB/EbfC family. In terms of assembly, homodimer.

It is found in the cytoplasm. Its subcellular location is the nucleoid. Binds to DNA and alters its conformation. May be involved in regulation of gene expression, nucleoid organization and DNA protection. This chain is Nucleoid-associated protein Rpal_0620, found in Rhodopseudomonas palustris (strain TIE-1).